We begin with the raw amino-acid sequence, 212 residues long: Imidazole glycerol phosphate synthase subunit HisH (212 aa).

Positions 1 to 212 (MLAILDYKAG…YEYCKEVSDA (212 aa)) constitute a Glutamine amidotransferase type-1 domain. Cys79 serves as the catalytic Nucleophile. Active-site residues include His187 and Glu189.

Heterodimer of HisH and HisF.

It is found in the cytoplasm. It catalyses the reaction 5-[(5-phospho-1-deoxy-D-ribulos-1-ylimino)methylamino]-1-(5-phospho-beta-D-ribosyl)imidazole-4-carboxamide + L-glutamine = D-erythro-1-(imidazol-4-yl)glycerol 3-phosphate + 5-amino-1-(5-phospho-beta-D-ribosyl)imidazole-4-carboxamide + L-glutamate + H(+). The enzyme catalyses L-glutamine + H2O = L-glutamate + NH4(+). It functions in the pathway amino-acid biosynthesis; L-histidine biosynthesis; L-histidine from 5-phospho-alpha-D-ribose 1-diphosphate: step 5/9. Its function is as follows. IGPS catalyzes the conversion of PRFAR and glutamine to IGP, AICAR and glutamate. The HisH subunit catalyzes the hydrolysis of glutamine to glutamate and ammonia as part of the synthesis of IGP and AICAR. The resulting ammonia molecule is channeled to the active site of HisF. The protein is Imidazole glycerol phosphate synthase subunit HisH of Maridesulfovibrio salexigens (strain ATCC 14822 / DSM 2638 / NCIMB 8403 / VKM B-1763) (Desulfovibrio salexigens).